The primary structure comprises 439 residues: Signal recognition particle 54 kDa protein (439 aa).

GTP contacts are provided by residues 104 to 111 (GLQGSGKT), 184 to 188 (DTAGR), and 242 to 245 (SKLD).

Belongs to the GTP-binding SRP family. SRP54 subfamily. In terms of assembly, part of the signal recognition particle protein translocation system, which is composed of SRP and FtsY. Archaeal SRP consists of a 7S RNA molecule of 300 nucleotides and two protein subunits: SRP54 and SRP19.

It localises to the cytoplasm. The catalysed reaction is GTP + H2O = GDP + phosphate + H(+). Its function is as follows. Involved in targeting and insertion of nascent membrane proteins into the cytoplasmic membrane. Binds to the hydrophobic signal sequence of the ribosome-nascent chain (RNC) as it emerges from the ribosomes. The SRP-RNC complex is then targeted to the cytoplasmic membrane where it interacts with the SRP receptor FtsY. This chain is Signal recognition particle 54 kDa protein, found in Methanococcoides burtonii (strain DSM 6242 / NBRC 107633 / OCM 468 / ACE-M).